We begin with the raw amino-acid sequence, 154 residues long: Iron-sulfur cluster assembly enzyme IscU (154 aa).

This sequence belongs to the NifU family. As to quaternary structure, component of the mitochondrial core iron-sulfur cluster (ISC) assembly complex at least composed of the cystein desulfurase Nfs1, the scaffold protein IscU, the accessory protein bcn92/Isd11/Lyrm4, and probably fh/frataxin. Interacts with Nfs1. Fe(2+) serves as cofactor. Requires [2Fe-2S] cluster as cofactor.

It participates in cofactor biosynthesis; iron-sulfur cluster biosynthesis. Its function is as follows. Scaffold protein for the de novo synthesis of iron-sulfur (Fe-S) clusters within mitochondria, which is required for maturation of both mitochondrial and cytoplasmic [2Fe-2S] and [4Fe-4S] proteins. Component of the mitochondrial core iron-sulfur cluster (ISC) assembly complex; regulates its activity. The protein is Iron-sulfur cluster assembly enzyme IscU of Drosophila melanogaster (Fruit fly).